The following is a 474-amino-acid chain: MALAVAPWGRQWEEARALGRAVRMLQRLEEQCVDPRLSVSPPSLRDLLPRTAQLLREVAHSRRAAGGGGPGGPGGSGDFLLIYLANLEAKSRQVAALLPPRGRRSANDELFRAGSRLRRQLAKLAIIFSHMHAELHALFPGGKYCGHMYQLTKAPAHTFWRESCGARCVLPWAEFESLLGTCHPVEPGCTALALRTTIDLTCSGHVSIFEFDVFTRLFQPWPTLLKNWQLLAVNHPGYMAFLTYDEVQERLQACRDKPGSYIFRPSCTRLGQWAIGYVSSDGSILQTIPANKPLSQVLLEGQKDGFYLYPDGKTHNPDLTELGQAEPQQRIHVSEEQLQLYWAMDSTFELCKICAESNKDVKIEPCGHLLCSCCLAAWQHSDSQTCPFCRCEIKGWEAVSIYQFHGQATAEDSGNSSDQEGRELELGQVPLSAPPLPPRPDLPPRKPRNAQPKVRLLKGNSPPAALGPQDPAPA.

A 4H region spans residues P7 to C145. The 315-residue stretch at P7 to E321 folds into the Cbl-PTB domain. Residues G146–F218 are EF-hand-like. Residues D199, T201, and E210 each coordinate Ca(2+). An SH2-like region spans residues Q219 to E321. Position 264 (R264) interacts with 4-O-phospho-L-tyrosine. The linker stretch occupies residues L322–L350. Y341 bears the Phosphotyrosine; by SRC mark. The RING-type zinc-finger motif lies at C351 to R390. An interaction with RET region spans residues C351 to A474. The segment at T409–A474 is disordered. A compositionally biased stretch (pro residues) spans S432–D441.

In terms of assembly, interacts with ubiquitin-conjugating enzyme E2 UBE2D2 and UBE2D3. Isoform 1 interacts with EGFR (tyrosine phosphorylated). Interacts with the SH3 domain proteins LYN and CRK. Interacts (via RING-type zinc finger) with TGFB1I1 (via LIM zinc-binding domain 2); the interaction is direct and enhances the E3 activity. Interacts directly with RET (inactive) and CD2AP; dissociates from RET upon RET activation by GDNF which also increases the interaction with CD2AP suggesting dissociation as CBLC:CD2AP complex. Interacts with SRC; the interaction is enhanced when SRC is phosphorylated at 'Tyr-419'. In terms of processing, phosphorylated on multiple tyrosine residues by SRC. Isoform 1, but not isoform 2, is phosphorylated on tyrosines by EGFR. Autoubiquitinated when phosphorylated at Tyr-341, enhanced by SRC; suggesting proteasomal degradation. As to expression, ubiquitous.

It carries out the reaction S-ubiquitinyl-[E2 ubiquitin-conjugating enzyme]-L-cysteine + [acceptor protein]-L-lysine = [E2 ubiquitin-conjugating enzyme]-L-cysteine + N(6)-ubiquitinyl-[acceptor protein]-L-lysine.. With respect to regulation, phosphorylation at Tyr-341 is necessary and sufficient for the activation of E3 activity. Its function is as follows. Acts as an E3 ubiquitin-protein ligase, which accepts ubiquitin from specific E2 ubiquitin-conjugating enzymes, and then transfers it to substrates promoting their degradation by the proteasome. Functionally coupled with the E2 ubiquitin-protein ligases UB2D1, UB2D2 and UB2D3. Regulator of EGFR mediated signal transduction; upon EGF activation, ubiquitinates EGFR. Isoform 1, but not isoform 2, inhibits EGF stimulated MAPK1 activation. Promotes ubiquitination of SRC phosphorylated at 'Tyr-419'. In collaboration with CD2AP may act as regulatory checkpoint for Ret signaling by modulating the rate of RET degradation after ligand activation; CD2AP converts it from an inhibitor to a promoter of RET degradation; the function limits the potency of GDNF on neuronal survival. The sequence is that of E3 ubiquitin-protein ligase CBL-C (CBLC) from Homo sapiens (Human).